The chain runs to 493 residues: N-acetylglucosamine kinase 1 (493 aa).

In terms of domain architecture, Hexokinase spans 27–490 (ESSVLSSIVE…SIIGAAIGAA (464 aa)). A hexokinase small subdomain region spans residues 79-221 (TGDEHGQYLV…GLTLDVQSIL (143 aa)). Positions 222–479 (NDSLAVYSAG…IKVDLKLIEN (258 aa)) are hexokinase large subdomain.

It belongs to the hexokinase family. In terms of assembly, interacts with histone deacetylase SIR2 under filamentation-inducing conditions.

It is found in the cytoplasm. It localises to the nucleus. Its subcellular location is the mitochondrion. It carries out the reaction N-acetyl-D-glucosamine + ATP = N-acetyl-D-glucosamine 6-phosphate + ADP + H(+). The catalysed reaction is D-mannose + ATP = D-mannose 6-phosphate + ADP + H(+). It catalyses the reaction D-glucose + ATP = D-glucose 6-phosphate + ADP + H(+). The enzyme catalyses D-glucosamine + ATP = D-glucosamine 6-phosphate + ADP + H(+). The protein operates within carbohydrate metabolism; hexose metabolism. Its pathway is carbohydrate degradation; glycolysis; D-glyceraldehyde 3-phosphate and glycerone phosphate from D-glucose: step 1/4. Functionally, component of the N-acetylglucosamine catabolic cascade that phosphorylates N-acetylglucosamine (GlcNAc), and allows the unique ability to utilise GlcNAc as carbon source. Converts GlcNAc to GlcNAc-6-P. Also able to phosphorylate glucose, glucosamine (GlcN), and mannose. Galactose, fructose, N-acetylmannosamine (ManNAc), mannosamine (ManN), galactosamine (GalN), and N-acetylgalactosamine (GalNAc) are not phosphorylated by HXK1. GlcNAc metabolism is closely associated with virulence and morphogenesis, and is involved in the cell wall synthesis. Acts both as a repressor and an activator of genes involved in maintaining cellular homeostasis. Contributes to white-opaque morphological transition and plays a role as a filamentation repressor. This is N-acetylglucosamine kinase 1 from Candida albicans (strain SC5314 / ATCC MYA-2876) (Yeast).